A 526-amino-acid chain; its full sequence is ATP synthase subunit alpha (526 aa).

171-178 (GDRQTGKT) contributes to the ATP binding site.

This sequence belongs to the ATPase alpha/beta chains family. In terms of assembly, F-type ATPases have 2 components, CF(1) - the catalytic core - and CF(0) - the membrane proton channel. CF(1) has five subunits: alpha(3), beta(3), gamma(1), delta(1), epsilon(1). CF(0) has four main subunits: a(1), b(1), b'(1) and c(9-12).

It localises to the cell inner membrane. It catalyses the reaction ATP + H2O + 4 H(+)(in) = ADP + phosphate + 5 H(+)(out). In terms of biological role, produces ATP from ADP in the presence of a proton gradient across the membrane. The alpha chain is a regulatory subunit. The chain is ATP synthase subunit alpha from Chlorobium phaeobacteroides (strain DSM 266 / SMG 266 / 2430).